We begin with the raw amino-acid sequence, 807 residues long: Glycerol-3-phosphate acyltransferase (807 aa).

Residues 308-313 (CHRSHM) carry the HXXXXD motif motif.

The protein belongs to the GPAT/DAPAT family.

Its subcellular location is the cell inner membrane. The catalysed reaction is sn-glycerol 3-phosphate + an acyl-CoA = a 1-acyl-sn-glycero-3-phosphate + CoA. It functions in the pathway phospholipid metabolism; CDP-diacylglycerol biosynthesis; CDP-diacylglycerol from sn-glycerol 3-phosphate: step 1/3. The sequence is that of Glycerol-3-phosphate acyltransferase from Shewanella sp. (strain MR-7).